We begin with the raw amino-acid sequence, 253 residues long: RAD51-associated protein 1 (253 aa).

Residues 32–51 (APLTKKSRTQPKEPKKENKK) form an interaction with DNA region. Disordered stretches follow at residues 33-74 (PLTK…TSLD), 141-169 (DREHVTDSEPVTIPDEESEEDSDYREGND), and 184-244 (KKIK…WVPP). Over residues 154 to 169 (PDEESEEDSDYREGND) the composition is skewed to acidic residues. Over residues 184–195 (KKIKRQTRKEKK) the composition is skewed to basic residues. An interaction with DNA region spans residues 190-241 (TRKEKKTPKSENNTTVMELKSEQTQKMMSTSSEPVGRPLYTSSPVTNKKPKW). A compositionally biased stretch (polar residues) spans 199-222 (SENNTTVMELKSEQTQKMMSTSSE).

Monomer.

The protein localises to the chromosome. Its subcellular location is the nucleus. Its function is as follows. Structure-specific DNA-binding protein involved in DNA repair by promoting RAD51-mediated homologous recombination. Acts by stimulating D-Loop formation by RAD51: specifically enhances joint molecule formation through its structure-specific DNA interaction and its interaction with RAD51. Binds single-stranded DNA (ssDNA), double-stranded DNA (dsDNA) and secondary DNA structures, such as D-loop structures: has a strong preference for branched-DNA structures that are obligatory intermediates during joint molecule formation. Involved in mitotic recombination-dependent replication fork processing. Also involved in meiosis by promoting DMC1-mediated homologous meiotic recombination. The polypeptide is RAD51-associated protein 1 (Gallus gallus (Chicken)).